Consider the following 178-residue polypeptide: MKDYNIENNNVEEENPNVETQVVDNEEIVRLKAEIEELKDKLIRTTAEIDNTRKRLEKARDEAKDYAIATFAKELLNVSDNLARALAHKPANSDVEVTNIISGVQMTKDELDKIFHKHHIEEIKPAIGSMFDYNLHNAISHIEHPDHEPNSIITLMQSGYKIRDRLLRPAAVQVVKKP.

The protein belongs to the GrpE family. As to quaternary structure, homodimer.

Its subcellular location is the cytoplasm. Participates actively in the response to hyperosmotic and heat shock by preventing the aggregation of stress-denatured proteins, in association with DnaK and GrpE. It is the nucleotide exchange factor for DnaK and may function as a thermosensor. Unfolded proteins bind initially to DnaJ; upon interaction with the DnaJ-bound protein, DnaK hydrolyzes its bound ATP, resulting in the formation of a stable complex. GrpE releases ADP from DnaK; ATP binding to DnaK triggers the release of the substrate protein, thus completing the reaction cycle. Several rounds of ATP-dependent interactions between DnaJ, DnaK and GrpE are required for fully efficient folding. The protein is Protein GrpE of Rickettsia prowazekii (strain Madrid E).